Reading from the N-terminus, the 355-residue chain is 12-oxophytodienoate reductase-like protein (355 aa).

FMN-binding positions include 30–32 (ALT), alanine 63, and glutamine 105. 175–178 (NASS) contacts substrate. Tyrosine 181 serves as the catalytic Proton donor. Residue arginine 265 coordinates substrate. FMN is bound by residues glycine 288 and 309–310 (GR).

Belongs to the NADH:flavin oxidoreductase/NADH oxidase family. FMN is required as a cofactor. As to expression, weakly expressed in flowers and roots.

The protein localises to the cytoplasm. Functionally, may be involved in the biosynthesis or metabolism of oxylipin signaling molecules. This is 12-oxophytodienoate reductase-like protein (OPR2) from Solanum lycopersicum (Tomato).